Here is a 343-residue protein sequence, read N- to C-terminus: Palmitoyltransferase ZDHHC4 (343 aa).

At 1–2 (MD) the chain is on the lumenal side. Residues 3-23 (FLVLFSFYLAFLLICVIMICI) form a helical membrane-spanning segment. The Cytoplasmic segment spans residues 24-67 (FTKSQRLKAVVLGGAQVCARVTPQCFQRAVQTLLHQLFHTRHPA). The helical transmembrane segment at 68–88 (FLALHLLLQGLVYAEYTYEVF) threads the bilayer. Residues 89–95 (SYCRELE) lie on the Lumenal side of the membrane. A helical transmembrane segment spans residues 96 to 116 (FSLPCLLLPYVLLSVNLVFFT). The Cytoplasmic segment spans residues 117–193 (LTCSTNPGTI…NCIGAWNTGY (77 aa)). Residues 149-199 (SRCSTCDLRKPARSKHCRVCDRCVHRFDHHCVWVNNCIGAWNTGYFLIYLL) form the DHHC domain. Cys-179 functions as the S-palmitoyl cysteine intermediate in the catalytic mechanism. The helical transmembrane segment at 194 to 214 (FLIYLLTLTASAATIAILSAA) threads the bilayer. Over 215–255 (FLLRLVAVSNLYQETYLDDLGRFQAVDTGFLIQHLFLAFPR) the chain is Lumenal. A helical transmembrane segment spans residues 256-276 (IIFLLGFVIVLSLLLAGYLCF). Residues 277-343 (ALYLAATNQT…ATPSYKKKKR (67 aa)) lie on the Cytoplasmic side of the membrane. The Di-lysine motif signature appears at 340–343 (KKKR).

It belongs to the DHHC palmitoyltransferase family. As to quaternary structure, interacts with CPT1A.

It localises to the endoplasmic reticulum membrane. The protein resides in the golgi apparatus membrane. It is found in the cell membrane. It carries out the reaction L-cysteinyl-[protein] + hexadecanoyl-CoA = S-hexadecanoyl-L-cysteinyl-[protein] + CoA. Its function is as follows. Palmitoyltransferase that could catalyze the addition of palmitate onto protein substrates including the D(2) dopamine receptor DRD2, GSK3B or MAVS. Mediates GSK3B palmitoylation to prevent its AKT1-mediated phosphorylation leading to activation of the STAT3 signaling pathway. Also catalyzes MAVS palmitoylation which promotes its stabilization and activation by inhibiting 'Lys-48'- but facilitating 'Lys-63'-linked ubiquitination. This is Palmitoyltransferase ZDHHC4 from Rattus norvegicus (Rat).